Reading from the N-terminus, the 121-residue chain is Protein SNORC (121 aa).

The first 24 residues, 1–24 (MASCLALRVALLLISGVLAPAVLT), serve as a signal peptide directing secretion. Topologically, residues 25–92 (AEGPQEPDPT…QDGGSLGPGA (68 aa)) are extracellular. The segment at 26–84 (EGPQEPDPTLWNEPIELPSGEGPLESTSHNQEFAVSGPPFPTSAPAPEDSTPPARVDQD) is disordered. Residues 93–113 (IAAIVIAALLATCVVLALVVV) traverse the membrane as a helical segment. Residues 114–121 (ALRKFSAS) are Cytoplasmic-facing.

Interacts (via the extracellular domain) with FGF2. As to expression, expressed only in cartilage, including nasal, knee epiphyseal and rib tissues. In proliferation and hypertrophic chondrocytes, detected intracellulary and in the pericellular extracellular matrix. In primary spongiosa, detected only in the extracellular matrix.

It localises to the membrane. The protein resides in the cytoplasm. The protein localises to the secreted. Its subcellular location is the extracellular space. It is found in the extracellular matrix. Plays a role in the regulation of chondrocyte maturation and postnatal endochondral ossification. May inhibit cell growth stimulation induced by FGF2. This is Protein SNORC from Mus musculus (Mouse).